The primary structure comprises 114 residues: Putative membrane protein insertion efficiency factor (114 aa).

The protein belongs to the UPF0161 family.

Its subcellular location is the cell inner membrane. In terms of biological role, could be involved in insertion of integral membrane proteins into the membrane. The protein is Putative membrane protein insertion efficiency factor of Nitrobacter hamburgensis (strain DSM 10229 / NCIMB 13809 / X14).